Here is a 211-residue protein sequence, read N- to C-terminus: NADH-quinone oxidoreductase subunit I (211 aa).

Residues 1-27 are disordered; sequence MANTDRPALPHKRAVPPSRADSGPRRR. 2 4Fe-4S ferredoxin-type domains span residues 71–101 and 117–146; these read LNRY…VEGA and RVYQ…MTYD. Positions 81, 84, 87, 91, 126, 129, 132, and 136 each coordinate [4Fe-4S] cluster.

Belongs to the complex I 23 kDa subunit family. As to quaternary structure, NDH-1 is composed of 14 different subunits. Subunits NuoA, H, J, K, L, M, N constitute the membrane sector of the complex. Requires [4Fe-4S] cluster as cofactor.

It localises to the cell membrane. It catalyses the reaction a quinone + NADH + 5 H(+)(in) = a quinol + NAD(+) + 4 H(+)(out). Its function is as follows. NDH-1 shuttles electrons from NADH, via FMN and iron-sulfur (Fe-S) centers, to quinones in the respiratory chain. The immediate electron acceptor for the enzyme in this species is believed to be menaquinone. Couples the redox reaction to proton translocation (for every two electrons transferred, four hydrogen ions are translocated across the cytoplasmic membrane), and thus conserves the redox energy in a proton gradient. In Mycobacterium tuberculosis (strain ATCC 25177 / H37Ra), this protein is NADH-quinone oxidoreductase subunit I.